The chain runs to 151 residues: Nucleoside diphosphate kinase (151 aa).

6 residues coordinate ATP: K11, F59, R87, T93, R104, and N114. Residue H117 is the Pros-phosphohistidine intermediate of the active site.

It belongs to the NDK family. The cofactor is Mg(2+).

It carries out the reaction a 2'-deoxyribonucleoside 5'-diphosphate + ATP = a 2'-deoxyribonucleoside 5'-triphosphate + ADP. It catalyses the reaction a ribonucleoside 5'-diphosphate + ATP = a ribonucleoside 5'-triphosphate + ADP. Its function is as follows. Major role in the synthesis of nucleoside triphosphates other than ATP. The ATP gamma phosphate is transferred to the NDP beta phosphate via a ping-pong mechanism, using a phosphorylated active-site intermediate. This is Nucleoside diphosphate kinase (NDK1) from Eremothecium gossypii (strain ATCC 10895 / CBS 109.51 / FGSC 9923 / NRRL Y-1056) (Yeast).